Consider the following 312-residue polypeptide: DNA-directed RNA polymerase subunit alpha (312 aa).

The interval 1–226 (MIEFEKPIIT…EHLNLFTDLT (226 aa)) is alpha N-terminal domain (alpha-NTD). The interval 242 to 312 (NDEKVLDRTI…DLGLGLKNDK (71 aa)) is alpha C-terminal domain (alpha-CTD).

This sequence belongs to the RNA polymerase alpha chain family. As to quaternary structure, homodimer. The RNAP catalytic core consists of 2 alpha, 1 beta, 1 beta' and 1 omega subunit. When a sigma factor is associated with the core the holoenzyme is formed, which can initiate transcription.

The enzyme catalyses RNA(n) + a ribonucleoside 5'-triphosphate = RNA(n+1) + diphosphate. In terms of biological role, DNA-dependent RNA polymerase catalyzes the transcription of DNA into RNA using the four ribonucleoside triphosphates as substrates. The sequence is that of DNA-directed RNA polymerase subunit alpha from Streptococcus agalactiae serotype Ia (strain ATCC 27591 / A909 / CDC SS700).